The primary structure comprises 294 residues: Bifunctional protein FolD (294 aa).

NADP(+)-binding positions include 171–173, Ser-196, and Ile-237; that span reads GRS.

The protein belongs to the tetrahydrofolate dehydrogenase/cyclohydrolase family. Homodimer.

It catalyses the reaction (6R)-5,10-methylene-5,6,7,8-tetrahydrofolate + NADP(+) = (6R)-5,10-methenyltetrahydrofolate + NADPH. It carries out the reaction (6R)-5,10-methenyltetrahydrofolate + H2O = (6R)-10-formyltetrahydrofolate + H(+). It participates in one-carbon metabolism; tetrahydrofolate interconversion. Its function is as follows. Catalyzes the oxidation of 5,10-methylenetetrahydrofolate to 5,10-methenyltetrahydrofolate and then the hydrolysis of 5,10-methenyltetrahydrofolate to 10-formyltetrahydrofolate. This chain is Bifunctional protein FolD, found in Synechocystis sp. (strain ATCC 27184 / PCC 6803 / Kazusa).